A 354-amino-acid polypeptide reads, in one-letter code: MKSFLSDKAKSIEPYTPGEQPKDKNYIKLNTNESPYPPSPYVKKALIESNFDDLRLYPDPNVSDLKKEIAELYNINTNNIFIGNGSDEILAFCFMAFFNRGDKIYYPNITYSFYSVYSSLFDLNEVKIPLKDDFTIDINDYKNLDSGIFIANPNAPTGLLLTLDQLEEIIINNKDNIVIIDEAYIDFAAIESAYKLTKKYDNLLVVQTFSKSRSLAGIRLGFAIGNENLIQGLKNIKYSFNSYTINRLSIIAGIEAIKDNQYFKDTVNKVINTREKTKIKLKELGFNVLDSKSNFIFISHKNIFAEDLYLKLKDKGILVRYFKSDLINNYIRVTIGTDEEMDIFVEKIKYIIKN.

Residues 1–11 show a composition bias toward basic and acidic residues; it reads MKSFLSDKAKS. The interval 1–33 is disordered; the sequence is MKSFLSDKAKSIEPYTPGEQPKDKNYIKLNTNE. Lysine 211 is modified (N6-(pyridoxal phosphate)lysine).

Belongs to the class-II pyridoxal-phosphate-dependent aminotransferase family. Histidinol-phosphate aminotransferase subfamily. As to quaternary structure, homodimer. Requires pyridoxal 5'-phosphate as cofactor.

The enzyme catalyses L-histidinol phosphate + 2-oxoglutarate = 3-(imidazol-4-yl)-2-oxopropyl phosphate + L-glutamate. The protein operates within amino-acid biosynthesis; L-histidine biosynthesis; L-histidine from 5-phospho-alpha-D-ribose 1-diphosphate: step 7/9. This chain is Histidinol-phosphate aminotransferase, found in Brachyspira hyodysenteriae (strain ATCC 49526 / WA1).